We begin with the raw amino-acid sequence, 565 residues long: Hemagglutinin-neuraminidase (565 aa).

The Intravirion portion of the chain corresponds to 1–19; that stretch reads MVAEDAPVRATCRVLFRTT. The helical transmembrane segment at 20-40 threads the bilayer; it reads TLIFLCTLLALSISILYESLI. Residues 41–565 are Virion surface-facing; that stretch reads TQKQIMSQAG…VPFIRQVTLS (525 aa). N139 carries an N-linked (GlcNAc...) asparagine; by host glycan. 3 cysteine pairs are disulfide-bonded: C161/C185, C175/C236, and C227/C240. An involved in neuraminidase activity region spans residues 223-228; it reads NRKSCS. An N-linked (GlcNAc...) asparagine; by host glycan is attached at N267. 3 cysteine pairs are disulfide-bonded: C333–C454, C365–C375, and C448–C458. N-linked (GlcNAc...) asparagine; by host glycosylation occurs at N504. Residues C528 and C539 are joined by a disulfide bond.

The protein belongs to the paramyxoviruses hemagglutinin-neuraminidase family. In terms of assembly, homotetramer; composed of disulfide-linked homodimers. Interacts with F protein trimer.

It localises to the virion membrane. The protein localises to the host cell membrane. The enzyme catalyses Hydrolysis of alpha-(2-&gt;3)-, alpha-(2-&gt;6)-, alpha-(2-&gt;8)- glycosidic linkages of terminal sialic acid residues in oligosaccharides, glycoproteins, glycolipids, colominic acid and synthetic substrates.. Attaches the virus to sialic acid-containing cell receptors and thereby initiating infection. Binding of HN protein to the receptor induces a conformational change that allows the F protein to trigger virion/cell membranes fusion. Its function is as follows. Neuraminidase activity ensures the efficient spread of the virus by dissociating the mature virions from the neuraminic acid containing glycoproteins. This chain is Hemagglutinin-neuraminidase (HN), found in Canis lupus familiaris (Dog).